Here is a 134-residue protein sequence, read N- to C-terminus: Terepressin/terephysin (134 aa).

A signal peptide spans 1–33 (MKCSVLPRSRLSWTMCVLLLPLLMLMLEGGVQG). A disulfide bond links cysteine 34 and cysteine 39. Residues 44–50 (KRAVDSV) constitute a propeptide that is removed on maturation. 7 cysteine pairs are disulfide-bonded: cysteine 56-cysteine 100, cysteine 59-cysteine 73, cysteine 67-cysteine 90, cysteine 74-cysteine 80, cysteine 107-cysteine 121, cysteine 115-cysteine 133, and cysteine 122-cysteine 127.

Belongs to the vasopressin/oxytocin family. Contains 7 disulfide bonds. Expressed by the venom duct.

The protein resides in the secreted. This Terebra subulata (Chocolate spotted auger) protein is Terepressin/terephysin.